Here is a 356-residue protein sequence, read N- to C-terminus: UDP-N-acetylglucosamine--N-acetylmuramyl-(pentapeptide) pyrophosphoryl-undecaprenol N-acetylglucosamine transferase (356 aa).

UDP-N-acetyl-alpha-D-glucosamine-binding positions include 12 to 14 (TGG), asparagine 124, arginine 163, serine 188, isoleucine 242, 261 to 266 (ALTVSE), and glutamine 287.

It belongs to the glycosyltransferase 28 family. MurG subfamily.

It is found in the cell inner membrane. It catalyses the reaction di-trans,octa-cis-undecaprenyl diphospho-N-acetyl-alpha-D-muramoyl-L-alanyl-D-glutamyl-meso-2,6-diaminopimeloyl-D-alanyl-D-alanine + UDP-N-acetyl-alpha-D-glucosamine = di-trans,octa-cis-undecaprenyl diphospho-[N-acetyl-alpha-D-glucosaminyl-(1-&gt;4)]-N-acetyl-alpha-D-muramoyl-L-alanyl-D-glutamyl-meso-2,6-diaminopimeloyl-D-alanyl-D-alanine + UDP + H(+). Its pathway is cell wall biogenesis; peptidoglycan biosynthesis. Cell wall formation. Catalyzes the transfer of a GlcNAc subunit on undecaprenyl-pyrophosphoryl-MurNAc-pentapeptide (lipid intermediate I) to form undecaprenyl-pyrophosphoryl-MurNAc-(pentapeptide)GlcNAc (lipid intermediate II). The chain is UDP-N-acetylglucosamine--N-acetylmuramyl-(pentapeptide) pyrophosphoryl-undecaprenol N-acetylglucosamine transferase from Pseudomonas fluorescens (strain SBW25).